The chain runs to 186 residues: Elongation factor P (186 aa).

This sequence belongs to the elongation factor P family.

It localises to the cytoplasm. The protein operates within protein biosynthesis; polypeptide chain elongation. Its function is as follows. Involved in peptide bond synthesis. Stimulates efficient translation and peptide-bond synthesis on native or reconstituted 70S ribosomes in vitro. Probably functions indirectly by altering the affinity of the ribosome for aminoacyl-tRNA, thus increasing their reactivity as acceptors for peptidyl transferase. This chain is Elongation factor P, found in Synechococcus sp. (strain CC9902).